Reading from the N-terminus, the 548-residue chain is Sterol esterase TGL1 (548 aa).

N-acetylmethionine; partial is present on M1. Topologically, residues 1 to 13 are lumenal; that stretch reads MYFPFLGRLSITD. A helical transmembrane segment spans residues 14-34; that stretch reads YIIVVLVYIESIISSVLKLIP. Residues 35–548 lie on the Cytoplasmic side of the membrane; the sequence is QPMINLFEWL…TTALDALNKE (514 aa). Positions 107–402 constitute an AB hydrolase-1 domain; it reads VVYLHHGLLM…NYEHLDLIWG (296 aa). Positions 199–203 match the GXSXG motif; the sequence is GFSQG. S201 (nucleophile) is an active-site residue. Residue K246 forms a Glycyl lysine isopeptide (Lys-Gly) (interchain with G-Cter in ubiquitin) linkage. Residues D369 and H396 each act as charge relay system in the active site. Disordered regions lie at residues 449-477 and 496-516; these read TTHPTHGLSYRTHSADRSPLSVQADEADE and IDEDNENEHQDDTEDQIHKEQ. Phosphoserine is present on residues S462 and S466. The span at 502–516 shows a compositional bias: basic and acidic residues; sequence NEHQDDTEDQIHKEQ. S521 and S538 each carry phosphoserine. Positions 528-548 are disordered; it reads KDLRQLDANSSTTALDALNKE. Residue T539 is modified to Phosphothreonine.

It belongs to the AB hydrolase superfamily. In terms of processing, not N-glycosylated.

It localises to the lipid droplet. It is found in the membrane. It carries out the reaction a sterol ester + H2O = a sterol + a fatty acid + H(+). Mediates the hydrolysis of steryl esters (SE). Preferentially hydrolyzes ergosteryl and zymosteryl esters. Required for mobilization of SEs from lipid particles/droplets, thereby playing a central role in lipid metabolism and sterol homeostasis. Sterol intermediates stored in SE and set free by SE hydrolases are recycled to the sterol biosynthetic pathway and converted to the final product, ergosterol, in the endoplasmic reticulum. Also has weak lipase activity toward triglycerides at neutral pH, however, the physiological relevance of this activity is unclear. This is Sterol esterase TGL1 (TGL1) from Saccharomyces cerevisiae (strain ATCC 204508 / S288c) (Baker's yeast).